Consider the following 106-residue polypeptide: Secreted RxLR effector protein 18 (106 aa).

The first 17 residues, 1–17, serve as a signal peptide directing secretion; the sequence is MRGSTAMLLAAIALFSS. The RxLR-dEER signature appears at 28 to 39; that stretch reads RTLRSFEELEER.

Belongs to the RxLR effector family.

It localises to the secreted. Its subcellular location is the host cell. Its function is as follows. Effector that may act as a suppressor of cell death to interrupt plant immunity. I. The protein is Secreted RxLR effector protein 18 of Plasmopara viticola (Downy mildew of grapevine).